Reading from the N-terminus, the 384-residue chain is Fructose-1,6-bisphosphate aldolase/phosphatase (384 aa).

Catalysis depends on D11, which acts as the Proton acceptor; for FBP phosphatase activity. Mg(2+) is bound by residues D11, H18, D52, and D53. H18 contacts beta-D-fructose 1,6-bisphosphate. H18 contacts dihydroxyacetone phosphate. Y90 is a binding site for beta-D-fructose 1,6-bisphosphate. Q94 is a binding site for Mg(2+). A beta-D-fructose 1,6-bisphosphate-binding site is contributed by 103-104 (GN). D131 contributes to the Mg(2+) binding site. K132 contacts beta-D-fructose 1,6-bisphosphate. K132 contributes to the dihydroxyacetone phosphate binding site. Y228 serves as the catalytic Proton donor/acceptor; for FBP aldolase activity. K231, D232, and D233 together coordinate Mg(2+). K231 serves as the catalytic Schiff-base intermediate with DHAP; for FBP aldolase activity. Residues 241-242 (QH), R265, D286, and Y347 each bind beta-D-fructose 1,6-bisphosphate. Dihydroxyacetone phosphate is bound by residues R265 and D286.

The protein belongs to the FBP aldolase/phosphatase family. As to quaternary structure, homooctamer; dimer of tetramers. Mg(2+) serves as cofactor.

It catalyses the reaction beta-D-fructose 1,6-bisphosphate + H2O = beta-D-fructose 6-phosphate + phosphate. It carries out the reaction beta-D-fructose 1,6-bisphosphate = D-glyceraldehyde 3-phosphate + dihydroxyacetone phosphate. It participates in carbohydrate biosynthesis; gluconeogenesis. Functionally, catalyzes two subsequent steps in gluconeogenesis: the aldol condensation of dihydroxyacetone phosphate (DHAP) and glyceraldehyde-3-phosphate (GA3P) to fructose-1,6-bisphosphate (FBP), and the dephosphorylation of FBP to fructose-6-phosphate (F6P). This chain is Fructose-1,6-bisphosphate aldolase/phosphatase, found in Sulfurisphaera tokodaii (strain DSM 16993 / JCM 10545 / NBRC 100140 / 7) (Sulfolobus tokodaii).